A 96-amino-acid polypeptide reads, in one-letter code: Large ribosomal subunit protein uL23 (96 aa).

This sequence belongs to the universal ribosomal protein uL23 family. Part of the 50S ribosomal subunit. Contacts protein L29, and trigger factor when it is bound to the ribosome.

Its function is as follows. One of the early assembly proteins it binds 23S rRNA. One of the proteins that surrounds the polypeptide exit tunnel on the outside of the ribosome. Forms the main docking site for trigger factor binding to the ribosome. The sequence is that of Large ribosomal subunit protein uL23 from Caldicellulosiruptor bescii (strain ATCC BAA-1888 / DSM 6725 / KCTC 15123 / Z-1320) (Anaerocellum thermophilum).